We begin with the raw amino-acid sequence, 425 residues long: 3-phosphoshikimate 1-carboxyvinyltransferase (425 aa).

Residues Lys21, Ser22, and Arg26 each coordinate 3-phosphoshikimate. Phosphoenolpyruvate is bound at residue Lys21. Phosphoenolpyruvate-binding residues include Gly91 and Arg119. 3-phosphoshikimate is bound by residues Ser164, Gln166, Asp311, and Lys338. Gln166 contacts phosphoenolpyruvate. The Proton acceptor role is filled by Asp311. Arg342 and Arg383 together coordinate phosphoenolpyruvate.

This sequence belongs to the EPSP synthase family. In terms of assembly, monomer.

The protein resides in the cytoplasm. It carries out the reaction 3-phosphoshikimate + phosphoenolpyruvate = 5-O-(1-carboxyvinyl)-3-phosphoshikimate + phosphate. It participates in metabolic intermediate biosynthesis; chorismate biosynthesis; chorismate from D-erythrose 4-phosphate and phosphoenolpyruvate: step 6/7. Catalyzes the transfer of the enolpyruvyl moiety of phosphoenolpyruvate (PEP) to the 5-hydroxyl of shikimate-3-phosphate (S3P) to produce enolpyruvyl shikimate-3-phosphate and inorganic phosphate. The sequence is that of 3-phosphoshikimate 1-carboxyvinyltransferase from Campylobacter fetus subsp. fetus (strain 82-40).